We begin with the raw amino-acid sequence, 194 residues long: ATP-dependent Clp protease proteolytic subunit 3 (194 aa).

The Nucleophile role is filled by S96. Residue H121 is part of the active site.

This sequence belongs to the peptidase S14 family. In terms of assembly, fourteen ClpP subunits assemble into 2 heptameric rings which stack back to back to give a disk-like structure with a central cavity, resembling the structure of eukaryotic proteasomes.

The protein resides in the cytoplasm. It catalyses the reaction Hydrolysis of proteins to small peptides in the presence of ATP and magnesium. alpha-casein is the usual test substrate. In the absence of ATP, only oligopeptides shorter than five residues are hydrolyzed (such as succinyl-Leu-Tyr-|-NHMec, and Leu-Tyr-Leu-|-Tyr-Trp, in which cleavage of the -Tyr-|-Leu- and -Tyr-|-Trp bonds also occurs).. Functionally, cleaves peptides in various proteins in a process that requires ATP hydrolysis. Has a chymotrypsin-like activity. Plays a major role in the degradation of misfolded proteins. In Rhizobium johnstonii (strain DSM 114642 / LMG 32736 / 3841) (Rhizobium leguminosarum bv. viciae), this protein is ATP-dependent Clp protease proteolytic subunit 3.